Consider the following 105-residue polypeptide: Cyclotide vibi-J (105 aa).

A signal peptide spans 1–9 (AAFALPALA). The propeptide occupies 10–71 (TSFEKDFITH…KSSNSINALG (62 aa)). Positions 72–102 (GTFPCGESCVWIPCISKVIGCACKSKVCYKN) form a cross-link, cyclopeptide (Gly-Asn). Intrachain disulfides connect Cys76–Cys92, Cys80–Cys94, and Cys85–Cys99. Positions 103 to 105 (SLA) are excised as a propeptide.

Post-translationally, this is a cyclic peptide.

Its function is as follows. Probably participates in a plant defense mechanism. The chain is Cyclotide vibi-J from Viola biflora (Yellow wood violet).